We begin with the raw amino-acid sequence, 97 residues long: Cytochrome c oxidase subunit 4 isoform 1, mitochondrial (97 aa).

The N-terminal 22 residues, 1–22 (MLATRVFNLIGRRAISTSVCVR), are a transit peptide targeting the mitochondrion. Residue lysine 29 is modified to N6-acetyllysine; alternate. Lysine 29 bears the N6-succinyllysine; alternate mark. Lysine 53 is modified (N6-acetyllysine). Phosphoserine occurs at positions 56 and 58. Lysine 60 carries the N6-acetyllysine; alternate modification. Position 60 is an N6-succinyllysine; alternate (lysine 60). N6-acetyllysine is present on lysine 67.

It belongs to the cytochrome c oxidase IV family. In terms of assembly, component of the cytochrome c oxidase (complex IV, CIV), a multisubunit enzyme composed of 14 subunits. The complex is composed of a catalytic core of 3 subunits MT-CO1, MT-CO2 and MT-CO3, encoded in the mitochondrial DNA, and 11 supernumerary subunits COX4I, COX5A, COX5B, COX6A, COX6B, COX6C, COX7A, COX7B, COX7C, COX8 and NDUFA4, which are encoded in the nuclear genome. The complex exists as a monomer or a dimer and forms supercomplexes (SCs) in the inner mitochondrial membrane with NADH-ubiquinone oxidoreductase (complex I, CI) and ubiquinol-cytochrome c oxidoreductase (cytochrome b-c1 complex, complex III, CIII), resulting in different assemblies (supercomplex SCI(1)III(2)IV(1) and megacomplex MCI(2)III(2)IV(2)). Interacts with PHB2; the interaction decreases in absence of SPHK2. Interacts with AFG1L. Interacts with ABCB7; this interaction allows the regulation of cellular iron homeostasis and cellular reactive oxygen species (ROS) levels in cardiomyocytes. Interacts with FLVCR2; this interaction occurs in the absence of heme and is disrupted upon heme binding. Interacts with IRGC.

It localises to the mitochondrion inner membrane. Its pathway is energy metabolism; oxidative phosphorylation. Its function is as follows. Component of the cytochrome c oxidase, the last enzyme in the mitochondrial electron transport chain which drives oxidative phosphorylation. The respiratory chain contains 3 multisubunit complexes succinate dehydrogenase (complex II, CII), ubiquinol-cytochrome c oxidoreductase (cytochrome b-c1 complex, complex III, CIII) and cytochrome c oxidase (complex IV, CIV), that cooperate to transfer electrons derived from NADH and succinate to molecular oxygen, creating an electrochemical gradient over the inner membrane that drives transmembrane transport and the ATP synthase. Cytochrome c oxidase is the component of the respiratory chain that catalyzes the reduction of oxygen to water. Electrons originating from reduced cytochrome c in the intermembrane space (IMS) are transferred via the dinuclear copper A center (CU(A)) of subunit 2 and heme A of subunit 1 to the active site in subunit 1, a binuclear center (BNC) formed by heme A3 and copper B (CU(B)). The BNC reduces molecular oxygen to 2 water molecules using 4 electrons from cytochrome c in the IMS and 4 protons from the mitochondrial matrix. The polypeptide is Cytochrome c oxidase subunit 4 isoform 1, mitochondrial (COX4I1) (Sus scrofa (Pig)).